The primary structure comprises 460 residues: Muscarinic acetylcholine receptor M1 (460 aa).

Residues 1–22 lie on the Extracellular side of the membrane; it reads MNTSAPPAVSPNITVLAPGKGP. 2 N-linked (GlcNAc...) asparagine glycosylation sites follow: asparagine 2 and asparagine 12. A helical membrane pass occupies residues 23-48; the sequence is WQVAFIGITTGLLSLATVTGNLLVLI. Topologically, residues 49-62 are cytoplasmic; the sequence is SFKVNTELKTVNNY. Residues 63-84 form a helical membrane-spanning segment; sequence FLLSLACADLIIGTFSMNLYTT. Residues 85 to 95 are Extracellular-facing; it reads YLLMGHWALGT. A helical transmembrane segment spans residues 96–121; that stretch reads LACDLWLALDYVASNASVMNLLLISF. Cysteine 98 and cysteine 178 are disulfide-bonded. At 122 to 142 the chain is on the cytoplasmic side; sequence DRYFSVTRPLSYRAKRTPRRA. Residues 143-164 traverse the membrane as a helical segment; it reads ALMIGLAWLVSFVLWAPAILFW. The Extracellular portion of the chain corresponds to 165–185; the sequence is QYLVGERTVLAGQCYIQFLSQ. Residues 186-209 form a helical membrane-spanning segment; sequence PIITFGTAMAAFYLPVTVMCTLYW. Topologically, residues 210 to 366 are cytoplasmic; that stretch reads RIYRETESRA…LVKEKKAART (157 aa). Disordered stretches follow at residues 225 to 256, 274 to 297, and 310 to 351; these read LQGSETPGKGGGSSSSSERSQPGAEGSPGTPP, WKEEEEEDEGSMESLTSSEGEEPG, and EAQA…QLAK. Threonine 230 is subject to Phosphothreonine. The segment covering 238 to 247 has biased composition (low complexity); sequence SSSSERSQPG. Over residues 328–343 the composition is skewed to basic residues; that stretch reads RPTKKGRDRAGKGQKP. Residues 367–390 traverse the membrane as a helical segment; it reads LSAILLAFILTWTPYNIMVLVSTF. Residues 391–397 are Extracellular-facing; sequence CKDCVPE. The chain crosses the membrane as a helical span at residues 398–420; the sequence is TLWELGYWLCYVNSTINPMCYAL. The Cytoplasmic portion of the chain corresponds to 421-460; that stretch reads CNKAFRDTFRLLLLCRWDKRRWRKIPKRPGSVHRTPSRQC. Threonine 428 carries the phosphothreonine modification. Phosphoserine is present on serine 451. Threonine 455 carries the phosphothreonine modification. Residue serine 457 is modified to Phosphoserine.

It belongs to the G-protein coupled receptor 1 family. Muscarinic acetylcholine receptor subfamily. CHRM1 sub-subfamily. As to quaternary structure, interacts with GPRASP2. Interacts with TMEM147.

Its subcellular location is the cell membrane. The protein resides in the postsynaptic cell membrane. In terms of biological role, the muscarinic acetylcholine receptor mediates various cellular responses, including inhibition of adenylate cyclase, breakdown of phosphoinositides and modulation of potassium channels through the action of G proteins. Primary transducing effect is Pi turnover. The chain is Muscarinic acetylcholine receptor M1 (CHRM1) from Pongo abelii (Sumatran orangutan).